A 377-amino-acid chain; its full sequence is Opsin-2 (377 aa).

Topologically, residues 1–57 are extracellular; sequence MNNQSENYYHGAQFEALKSAGAIEMLGDGLTGDDLAAIPEHWLSYPAPPASAHTALA. N-linked (GlcNAc...) asparagine glycosylation is present at Asn3. A helical transmembrane segment spans residues 58 to 78; it reads LLYIFFTFAALVGNGMVIFIF. Topologically, residues 79–89 are cytoplasmic; that stretch reads STTKSLRTSSN. The helical transmembrane segment at 90-110 threads the bilayer; that stretch reads FLVLNLAILDFIMMAKAPIFI. The Extracellular segment spans residues 111–126; that stretch reads YNSAMRGFAVGTVGCQ. Cys125 and Cys202 are joined by a disulfide. Residues 127-146 traverse the membrane as a helical segment; it reads IFALMGAYSGIGAGMTNACI. Topologically, residues 147–166 are cytoplasmic; sequence AYDRHSTITRPLDGRLSEGK. Residues 167–187 traverse the membrane as a helical segment; that stretch reads VLLMVAFVWIYSTPWALLPLL. Topologically, residues 188-214 are extracellular; the sequence is KIWGRYVPEGYLTSCSFDYLTNTFDTK. A helical membrane pass occupies residues 215-235; the sequence is LFVACIFTCSYVFPMSLIIYF. Topologically, residues 236–283 are cytoplasmic; sequence YSGIVKQVFAHEAALREQAKKMNVESLRANQGGSSESAEIRIAKAALT. Residues 284–304 traverse the membrane as a helical segment; the sequence is VCFLFVASWTPYGVMALIGAF. At 305–314 the chain is on the extracellular side; that stretch reads GNQQLLTPGV. A helical membrane pass occupies residues 315-335; sequence TMIPAVACKAVACISPWVYAI. The Cytoplasmic segment spans residues 336–377; it reads RHPMYRQELQRRMPWLQIDEPDDTVSTATSNTTNSAPPAATA. Residues 355 to 377 form a disordered region; it reads EPDDTVSTATSNTTNSAPPAATA. Residues 361–377 are compositionally biased toward low complexity; sequence STATSNTTNSAPPAATA.

This sequence belongs to the G-protein coupled receptor 1 family. Opsin subfamily. In terms of tissue distribution, in the retina, expression is essentially uniformly distributed, but a higher level is seen in the dorsal region of the retina and in the dorsal rim retinulae.

It is found in the membrane. Visual pigments are the light-absorbing molecules that mediate vision. They consist of an apoprotein, opsin, covalently linked to cis-retinal. May play a role in photoperiodic photoreception. The polypeptide is Opsin-2 (OP2) (Manduca sexta (Tobacco hawkmoth)).